The primary structure comprises 762 residues: Ribosome-releasing factor 2, mitochondrial (762 aa).

The N-terminal 35 residues, 1–35 (MLLSLTFPVLRGCTGHLVNRSLQAPRWRVTWKRSY), are a transit peptide targeting the mitochondrion. Residues 54–341 (SKIRNIGIMA…AITAYLPAPN (288 aa)) enclose the tr-type G domain. GTP-binding positions include 63 to 70 (AHIDAGKT), 127 to 131 (DTPGH), and 181 to 184 (NKMD).

The protein belongs to the TRAFAC class translation factor GTPase superfamily. Classic translation factor GTPase family. EF-G/EF-2 subfamily.

It localises to the mitochondrion. The enzyme catalyses GTP + H2O = GDP + phosphate + H(+). Mitochondrial GTPase that mediates the disassembly of ribosomes from messenger RNA at the termination of mitochondrial protein biosynthesis. Acts in collaboration with mrrf. GTP hydrolysis follows the ribosome disassembly and probably occurs on the ribosome large subunit. Not involved in the GTP-dependent ribosomal translocation step during translation elongation. The chain is Ribosome-releasing factor 2, mitochondrial (gfm2) from Danio rerio (Zebrafish).